The following is a 625-amino-acid chain: Ankyrin repeat domain-containing protein oryK (625 aa).

ANK repeat units lie at residues 1-27 (MDIY…DVDG), 31-60 (DGKT…GRGP), 62-89 (NPSL…NAER), 90-119 (EHRS…EYQD), 162-195 (FFDY…DVNC), 202-232 (QFET…DLTI), 500-530 (DTRC…NVNF), 534-562 (SDRT…DIDL), and 568-598 (EGRT…DFSI).

It functions in the pathway secondary metabolite biosynthesis. In terms of biological role, ankyrin repeat domain-containing protein; part of the gene cluster that mediates the biosynthesis of oryzines, natural products with an unusual maleidride backbone. The two subunits of the fungal fatty acid synthase oryfasA and oryfasB probably form octenoic acid. This fatty acid is most likely activated by the acyl-CoA ligase oryP to give octenyl-CoA before the citrate synthase-like protein oryE catalyzes condensation with oxaloacetate to form tricarboxylic acid. The next steps of the pathways are conjectural, but a favorite possible route has been proposed, beginning with decarboxylation and concomitant dehydration by the decarboxylase oryM, followed by tautomerization, which may lead to the production of a diene intermediate. Reduction of this diene intermediate could give the known metabolite piliformic acid. On the pathway to oryzine B and oryzine A, however, hydroxylation of the diene by the alpha-ketoglutarate-dependent dioxygenase oryG and lactonisation by the lactonohydrolases oryH or oryL could give oryzine B directly. Finally, enoyl reduction by the dehydrogenase oryD would then convert oryzine B into oryzine A. The sequence is that of Ankyrin repeat domain-containing protein oryK from Aspergillus oryzae (strain ATCC 42149 / RIB 40) (Yellow koji mold).